Consider the following 230-residue polypeptide: NAD(P)H-hydrate epimerase (230 aa).

The region spanning 11-218 (AIAVDQELFN…ALQRKYELNL (208 aa)) is the YjeF N-terminal domain. Residue 61-65 (NNGGD) participates in (6S)-NADPHX binding. Positions 62 and 126 each coordinate K(+). (6S)-NADPHX contacts are provided by residues 130–136 (GFSFKPP) and Asp159. Ser162 is a K(+) binding site.

The protein belongs to the NnrE/AIBP family. K(+) serves as cofactor.

The enzyme catalyses (6R)-NADHX = (6S)-NADHX. It carries out the reaction (6R)-NADPHX = (6S)-NADPHX. Functionally, catalyzes the epimerization of the S- and R-forms of NAD(P)HX, a damaged form of NAD(P)H that is a result of enzymatic or heat-dependent hydration. This is a prerequisite for the S-specific NAD(P)H-hydrate dehydratase to allow the repair of both epimers of NAD(P)HX. The sequence is that of NAD(P)H-hydrate epimerase from Drosophila melanogaster (Fruit fly).